Here is a 768-residue protein sequence, read N- to C-terminus: Degenerin mec-4 (768 aa).

Over 1–109 (MSWMQNLKNY…GEAPNVYYRA (109 aa)) the chain is Cytoplasmic. Residues 110 to 130 (VWVMLFLGCMIMLYLNAQSVL) form a helical membrane-spanning segment. The Extracellular portion of the chain corresponds to 131–718 (DKYNRNEKIV…VNLLADFGGQ (588 aa)). 2 disordered regions span residues 187–221 (AGGNKEHDGEKEVITEAPTTPAPTTKPSRRRGKRD) and 237–260 (GSQGSSEQEDKDDEKEEEMHETTT). The segment covering 189 to 200 (GNKEHDGEKEVI) has biased composition (basic and acidic residues). Positions 203–212 (APTTPAPTTK) are enriched in low complexity. Acidic residues predominate over residues 243–252 (EQEDKDDEKE). 6 N-linked (GlcNAc...) asparagine glycosylation sites follow: asparagine 336, asparagine 357, asparagine 480, asparagine 484, asparagine 503, and asparagine 671. A helical membrane pass occupies residues 719–739 (LGLWCGISFLTCCEFVFLFLE). The Cytoplasmic portion of the chain corresponds to 740 to 768 (TAYMSAEHNYSLYKKKKAEKAKKVASGSF).

Belongs to the amiloride-sensitive sodium channel (TC 1.A.6) family. The channel is probably composed of at least the mec-2, mec-4, mec-6 and mec-10 subunits.

Its subcellular location is the membrane. In terms of biological role, probable sodium channel subunit. May be needed for mechanosensory transduction (touch sensitivity). Negatively regulates the turning step of male mating behavior. The sequence is that of Degenerin mec-4 (mec-4) from Caenorhabditis briggsae.